A 263-amino-acid chain; its full sequence is Neurogenin-2 (263 aa).

The disordered stretch occupies residues Leu20–Pro76. Residues Ser24 to Ser36 show a composition bias toward polar residues. The bHLH domain maps to Thr112–Leu164. Residues Leu197–Ser231 show a composition bias toward low complexity. The tract at residues Leu197–Ala253 is disordered.

As to quaternary structure, efficient DNA binding requires dimerization with another bHLH protein.

It is found in the nucleus. Functionally, transcriptional regulator. Involved in neuronal differentiation. Activates transcription by binding to the E box (5'-CANNTG-3'). The chain is Neurogenin-2 (Neurog2) from Mus musculus (Mouse).